The following is a 209-amino-acid chain: Cilia- and flagella-associated protein 418 (209 aa).

Residues 1 to 76 (MAKDLDELLD…LINEIFEEPD (76 aa)) are required for interaction with FAM161A. Residues 24 to 58 (LDLGERPKGDGGGGSHSGDRNGAQEKETLRSTETF) are disordered. Over residues 40-58 (SGDRNGAQEKETLRSTETF) the composition is skewed to basic and acidic residues.

Interacts (via N-terminus) with FAM161A (via central region); the interaction is direct. As to expression, expressed in multiple tissues, including the brain, kidney, lung, spleen, heart, trachea and testis. Expressed in the retina (at protein level).

It is found in the cytoplasm. Its subcellular location is the photoreceptor inner segment. Functionally, may be involved in photoreceptor outer segment disk morphogenesis. This Mus musculus (Mouse) protein is Cilia- and flagella-associated protein 418.